A 305-amino-acid chain; its full sequence is Olfactory receptor 9G9 (305 aa).

Residues 1 to 27 lie on the Extracellular side of the membrane; the sequence is MQRSNHTVTEFILLGFTTDPGMQLGLF. A glycan (N-linked (GlcNAc...) asparagine) is linked at asparagine 5. Residues 28–48 traverse the membrane as a helical segment; sequence VVFLGVYSLTVVGNSTLIVLI. At 49-64 the chain is on the cytoplasmic side; the sequence is CNDSHLHTPMYFVVGN. A helical transmembrane segment spans residues 65–85; it reads LSFLDLWYSSVYTPKILVICI. Over 86-96 the chain is Extracellular; it reads SEDKSISFAGC. A disulfide bond links cysteine 96 and cysteine 178. Residues 97-117 form a helical membrane-spanning segment; sequence LCQFFFSAGLAYSECCLLAAM. Residues 118–138 are Cytoplasmic-facing; that stretch reads AYDRYVAISKPLLYAQAMSIK. The chain crosses the membrane as a helical span at residues 139–159; it reads LCALLVAVSYCGGFINSSIIT. The Extracellular segment spans residues 160-200; that stretch reads KKTFSFNFCCENIIDDFFCDLLPLVKLACGEKGCYKFLMYF. The chain crosses the membrane as a helical span at residues 201–221; that stretch reads LLASNVICPAVLILASYLFII. Topologically, residues 222-239 are cytoplasmic; that stretch reads TSVLRISSSQGRLKAFST. The chain crosses the membrane as a helical span at residues 240 to 260; sequence CSSHLTSVTLYYGSILYIYAL. Residues 261-271 are Extracellular-facing; it reads PRSSYSFDMDK. A helical membrane pass occupies residues 272–291; that stretch reads IVSTFYTEVLPMLNPMIYSL. Topologically, residues 292–305 are cytoplasmic; the sequence is RNKDVKEALKKLLP.

The protein belongs to the G-protein coupled receptor 1 family.

The protein resides in the cell membrane. Functionally, odorant receptor. In Homo sapiens (Human), this protein is Olfactory receptor 9G9 (OR9G9).